The primary structure comprises 309 residues: Protease HtpX homolog (309 aa).

Helical transmembrane passes span 7-27 and 28-48; these read FILL…IGGP and TGML…YWNA. His-134 serves as a coordination point for Zn(2+). Glu-135 is an active-site residue. Residue His-138 coordinates Zn(2+). The next 2 membrane-spanning stretches (helical) occupy residues 149 to 169 and 177 to 197; these read VTAT…FFGG and PGGL…AMLV. Position 206 (Glu-206) interacts with Zn(2+). A disordered region spans residues 289–309; sequence TRGRSGTAVPTGATGKSGPWG.

The protein belongs to the peptidase M48B family. Zn(2+) is required as a cofactor.

Its subcellular location is the cell inner membrane. The protein is Protease HtpX homolog of Caulobacter sp. (strain K31).